The chain runs to 446 residues: Tubulin beta-6 chain (446 aa).

GTP-binding residues include Gln11, Glu69, Ser138, Gly142, Thr143, Gly144, Asn204, and Asn226. Glu69 contacts Mg(2+). The segment at 426-446 is disordered; sequence QDATADEEEYEDEEEVQADDM. The span at 429-446 shows a compositional bias: acidic residues; it reads TADEEEYEDEEEVQADDM.

Belongs to the tubulin family. In terms of assembly, dimer of alpha and beta chains. A typical microtubule is a hollow water-filled tube with an outer diameter of 25 nm and an inner diameter of 15 nM. Alpha-beta heterodimers associate head-to-tail to form protofilaments running lengthwise along the microtubule wall with the beta-tubulin subunit facing the microtubule plus end conferring a structural polarity. Microtubules usually have 13 protofilaments but different protofilament numbers can be found in some organisms and specialized cells. Mg(2+) is required as a cofactor.

Its subcellular location is the cytoplasm. The protein localises to the cytoskeleton. In terms of biological role, tubulin is the major constituent of microtubules, a cylinder consisting of laterally associated linear protofilaments composed of alpha- and beta-tubulin heterodimers. Microtubules grow by the addition of GTP-tubulin dimers to the microtubule end, where a stabilizing cap forms. Below the cap, tubulin dimers are in GDP-bound state, owing to GTPase activity of alpha-tubulin. This chain is Tubulin beta-6 chain (TUBB6), found in Zea mays (Maize).